The chain runs to 293 residues: Protein transport protein yif1 (293 aa).

Topologically, residues 1-139 are cytoplasmic; that stretch reads MPPKLYHPQP…PPAEDLNSPD (139 aa). The chain crosses the membrane as a helical span at residues 140 to 160; it reads MYIPLMAFTTHILLLCALAGL. The Lumenal portion of the chain corresponds to 161–175; the sequence is QDDFQPELFGLRASK. The helical transmembrane segment at 176–196 threads the bilayer; the sequence is ACAVVLVEFLATRLGCYLLNI. The Cytoplasmic portion of the chain corresponds to 197–201; sequence SSQSQ. The helical transmembrane segment at 202–222 threads the bilayer; sequence VLDLLAFSGYKFVGLILTSLS. Over 223-226 the chain is Lumenal; that stretch reads KLFE. The helical transmembrane segment at 227-247 threads the bilayer; that stretch reads MPWVTRFVFLYMYLATAFFLL. At 248 to 271 the chain is on the cytoplasmic side; the sequence is RSLKYAVLPESTMAINATITSHQR. The helical transmembrane segment at 272 to 292 threads the bilayer; the sequence is SRRIYFLFFIAASQILFMYVL. Residue S293 is a topological domain, lumenal.

This sequence belongs to the YIF1 family. Component of the yip1-yif1 complex, composed of at least yif1, yip1 and yos1. The complex interacts with the ER to Golgi SNAREs bos1 and sec22.

It localises to the endoplasmic reticulum membrane. The protein resides in the golgi apparatus membrane. It is found in the cytoplasmic vesicle. Its subcellular location is the COPII-coated vesicle. In terms of biological role, required for fusion of ER-derived vesicles with the Golgi during ER-to-Golgi protein transport. May be involved in proper membrane localization of Rab GTPases. In Schizosaccharomyces pombe (strain 972 / ATCC 24843) (Fission yeast), this protein is Protein transport protein yif1.